The following is a 284-amino-acid chain: Bifunctional protein FolD (284 aa).

Residues 165–167 (GRG), T192, and V233 contribute to the NADP(+) site.

The protein belongs to the tetrahydrofolate dehydrogenase/cyclohydrolase family. In terms of assembly, homodimer.

The enzyme catalyses (6R)-5,10-methylene-5,6,7,8-tetrahydrofolate + NADP(+) = (6R)-5,10-methenyltetrahydrofolate + NADPH. It catalyses the reaction (6R)-5,10-methenyltetrahydrofolate + H2O = (6R)-10-formyltetrahydrofolate + H(+). It functions in the pathway one-carbon metabolism; tetrahydrofolate interconversion. Functionally, catalyzes the oxidation of 5,10-methylenetetrahydrofolate to 5,10-methenyltetrahydrofolate and then the hydrolysis of 5,10-methenyltetrahydrofolate to 10-formyltetrahydrofolate. This chain is Bifunctional protein FolD, found in Corynebacterium glutamicum (strain R).